A 983-amino-acid chain; its full sequence is 26S proteasome regulatory subunit RPN1 (983 aa).

The span at 1-26 (MSTDKKKEEVPKPETEDLTVKDETKN) shows a compositional bias: basic and acidic residues. Disordered stretches follow at residues 1–44 (MSTD…EDQK) and 169–188 (VEKEAEDNSTSTESSPQPPH). 5 PC repeats span residues 415–447 (SAVASIGSIYQWNIDGLQQLDKYLYVDEPEVKA), 448–484 (GGLLGIGIASAGVHHDVEPALLLLQEYINHSDTKIST), 485–519 (AAILGIGIAFAGSKNDEVLGLLLPVVSNTENSLEL), 520–557 (AAIAALALSHVFVGTCNGDITTAVMDNFLERTPLELKS), and 563–595 (LALSLGLLYLGQGEHVDDVLETINAIEHPMTSA). 2 disordered regions span residues 625–644 (AVKSSDEDEDEDNEELSQED) and 662–724 (EPQG…GAND). A compositionally biased stretch (acidic residues) spans 630–642 (DEDEDEDNEELSQ). A compositionally biased stretch (basic and acidic residues) spans 688 to 705 (NVKKEENEEEKTEKSEKT). Residues 706–718 (ENDEEEEDEEESK) show a composition bias toward acidic residues. PC repeat units follow at residues 768–799 (LAMGLVSVADPQMKVFDTLTRFSHDPDLDVSM) and 800–834 (NSIFAMGLCGVGTNNARLAQLLRQLASYYSREQDA).

It belongs to the proteasome subunit S2 family.

In terms of biological role, acts as a regulatory subunit of the 26 proteasome which is involved in the ATP-dependent degradation of ubiquitinated proteins. This Candida glabrata (strain ATCC 2001 / BCRC 20586 / JCM 3761 / NBRC 0622 / NRRL Y-65 / CBS 138) (Yeast) protein is 26S proteasome regulatory subunit RPN1 (RPN1).